We begin with the raw amino-acid sequence, 191 residues long: ATP-dependent dethiobiotin synthetase BioD 2 (191 aa).

ATP is bound at residue 13–18; it reads DVGKTI. T17 serves as a coordination point for Mg(2+). The active site involves K38. Position 42 (T42) interacts with substrate. ATP contacts are provided by residues D50 and 115–118; that span reads EGAG. Positions 50 and 115 each coordinate Mg(2+).

Belongs to the dethiobiotin synthetase family. In terms of assembly, homodimer. Requires Mg(2+) as cofactor.

Its subcellular location is the cytoplasm. It carries out the reaction (7R,8S)-7,8-diammoniononanoate + CO2 + ATP = (4R,5S)-dethiobiotin + ADP + phosphate + 3 H(+). The protein operates within cofactor biosynthesis; biotin biosynthesis; biotin from 7,8-diaminononanoate: step 1/2. Functionally, catalyzes a mechanistically unusual reaction, the ATP-dependent insertion of CO2 between the N7 and N8 nitrogen atoms of 7,8-diaminopelargonic acid (DAPA, also called 7,8-diammoniononanoate) to form a ureido ring. This chain is ATP-dependent dethiobiotin synthetase BioD 2, found in Haemophilus influenzae (strain ATCC 51907 / DSM 11121 / KW20 / Rd).